Reading from the N-terminus, the 447-residue chain is tRNA-2-methylthio-N(6)-dimethylallyladenosine synthase (447 aa).

One can recognise an MTTase N-terminal domain in the interval 10–128 (KLFCISTYGC…FPEYLHRVLQ (119 aa)). Residues Cys-19, Cys-55, Cys-89, Cys-165, Cys-169, and Cys-172 each coordinate [4Fe-4S] cluster. Positions 151–382 (RKSDVKAFVT…EAINKKVVIK (232 aa)) constitute a Radical SAM core domain. A TRAM domain is found at 384 to 447 (KEYEGKVVEV…PFSLIGEIVE (64 aa)).

It belongs to the methylthiotransferase family. MiaB subfamily. In terms of assembly, monomer. [4Fe-4S] cluster is required as a cofactor.

It localises to the cytoplasm. It carries out the reaction N(6)-dimethylallyladenosine(37) in tRNA + (sulfur carrier)-SH + AH2 + 2 S-adenosyl-L-methionine = 2-methylsulfanyl-N(6)-dimethylallyladenosine(37) in tRNA + (sulfur carrier)-H + 5'-deoxyadenosine + L-methionine + A + S-adenosyl-L-homocysteine + 2 H(+). Its function is as follows. Catalyzes the methylthiolation of N6-(dimethylallyl)adenosine (i(6)A), leading to the formation of 2-methylthio-N6-(dimethylallyl)adenosine (ms(2)i(6)A) at position 37 in tRNAs that read codons beginning with uridine. This chain is tRNA-2-methylthio-N(6)-dimethylallyladenosine synthase, found in Clostridium perfringens (strain SM101 / Type A).